The primary structure comprises 358 residues: Chorismate synthase (358 aa).

The segment at 39–61 (ADIQPFLDKRRPGQSRHTTQRQE) is disordered. Arg48 and Arg54 together coordinate NADP(+). FMN is bound by residues 125–127 (RSS), 237–238 (NA), Gly284, 299–303 (KPTSS), and Arg325.

This sequence belongs to the chorismate synthase family. As to quaternary structure, homotetramer. FMNH2 is required as a cofactor.

The enzyme catalyses 5-O-(1-carboxyvinyl)-3-phosphoshikimate = chorismate + phosphate. It functions in the pathway metabolic intermediate biosynthesis; chorismate biosynthesis; chorismate from D-erythrose 4-phosphate and phosphoenolpyruvate: step 7/7. In terms of biological role, catalyzes the anti-1,4-elimination of the C-3 phosphate and the C-6 proR hydrogen from 5-enolpyruvylshikimate-3-phosphate (EPSP) to yield chorismate, which is the branch point compound that serves as the starting substrate for the three terminal pathways of aromatic amino acid biosynthesis. This reaction introduces a second double bond into the aromatic ring system. The protein is Chorismate synthase of Sphingopyxis alaskensis (strain DSM 13593 / LMG 18877 / RB2256) (Sphingomonas alaskensis).